The chain runs to 2539 residues: Zinc finger FYVE domain-containing protein 26 (2539 aa).

S297, S615, S619, and S703 each carry phosphoserine. 3 disordered regions span residues 594–637 (HLPE…SLGV), 699–724 (ISSR…GLQS), and 738–806 (WRHK…SLSA). A compositionally biased stretch (basic residues) spans 764-774 (PSLRRGRRTRR). Residues 787–805 (SLESTSSELSTSTSEGSLS) show a composition bias toward low complexity. S800 bears the Phosphoserine mark. Residues 868 to 895 (MFMERYQEVIQELAQVEHKIENQNSDAG) adopt a coiled-coil conformation. The tract at residues 1267-1296 (DLPLSTPSSPRTTENPTLERKPYSSPRDSS) is disordered. Positions 1271 to 1282 (STPSSPRTTENP) are enriched in polar residues. Phosphoserine occurs at positions 1742, 1764, 1780, and 1782. Positions 1754 to 1808 (ADPETLPRSPSAEFSPAAPPGISSIHSPSLRERSFPPTQPSQEFVPPATPPARHQ) are disordered. The segment covering 1760-1769 (PRSPSAEFSP) has biased composition (low complexity). The FYVE-type zinc finger occupies 1812 to 1872 (DETESICMVC…VCDQCYSYCN (61 aa)). C1818, C1821, C1835, C1838, C1843, C1846, C1864, and C1867 together coordinate Zn(2+).

In terms of assembly, interacts with AP5Z1, AP5B1, AP5S1 and SPG11. Interacts with TTC19 and KIF13A. In terms of tissue distribution, strongest expression in the adrenal gland, bone marrow, adult brain, fetal brain, lung, placenta, prostate, skeletal muscle, testis, thymus, and retina. Intermediate levels are detected in other structures, including the spinal cord.

The protein localises to the cytoplasm. It is found in the cytoskeleton. It localises to the microtubule organizing center. The protein resides in the centrosome. Its subcellular location is the midbody. In terms of biological role, phosphatidylinositol 3-phosphate-binding protein required for the abscission step in cytokinesis: recruited to the midbody during cytokinesis and acts as a regulator of abscission. May also be required for efficient homologous recombination DNA double-strand break repair. In Homo sapiens (Human), this protein is Zinc finger FYVE domain-containing protein 26 (ZFYVE26).